A 910-amino-acid polypeptide reads, in one-letter code: DNA mismatch repair protein MutS (910 aa).

Residues 1-11 are compositionally biased toward basic and acidic residues; the sequence is MEAKVEEKEPE. The interval 1 to 21 is disordered; it reads MEAKVEEKEPEPVENAGPDAP. 658 to 665 serves as a coordination point for ATP; sequence GPNMGGKS.

The protein belongs to the DNA mismatch repair MutS family.

This protein is involved in the repair of mismatches in DNA. It is possible that it carries out the mismatch recognition step. This protein has a weak ATPase activity. The chain is DNA mismatch repair protein MutS from Brucella abortus (strain 2308).